We begin with the raw amino-acid sequence, 183 residues long: Ras-related protein Rap-2a (183 aa).

Gly-10–Ser-17 is a binding site for GTP. An Effector region motif is present at residues Tyr-32 to Tyr-40. A (Microbial infection) O-linked (Glc) threonine; by C.difficile toxin TcdA, and by P.sordellii toxin TcsL glycan is attached at Thr-35. GTP-binding positions include Asp-57–Thr-61 and Asn-116–Asp-119. S-palmitoyl cysteine attachment occurs at residues Cys-176 and Cys-177. A Cysteine methyl ester modification is found at Cys-180. The S-farnesyl cysteine moiety is linked to residue Cys-180. Residues Asn-181–Gln-183 constitute a propeptide, removed in mature form.

The protein belongs to the small GTPase superfamily. Ras family. In terms of assembly, interacts (GTP-bound form) with RUNDC3A. Interacts with RGS14; the interaction is GTP-dependent. Interacts with PLCE1. Interacts with ARHGAP29, SGSM1, SGSM2 and SGSM3. Interacts (GTP-bound form preferentially) with TNIK (via the CNH domain); the interaction is direct and recruits RAP2A to the E3 ubiquitin ligase NEDD4. Interacts with MINK1. Interacts (GTP-bound form preferentially) with MAP4K4. Interacts with cytoskeletal actin. In terms of processing, ubiquitinated; undergoes 'Lys-63' monoubiquitination and diubiquitination by NEDD4. Multiple lysine residues are probably modified. Ubiquitination requires TNIK, prevents interaction with effectors and inactivates RAP2A. Ubiquitination by the ECS(RAB40B) complex leads to RAP2A localization to lamellipodia plasma membrane, activation, and regulation of sorting at early endosomes for recycling to the lamellipodia plasma membrane. Post-translationally, palmitoylated. Palmitoylation is required for association with recycling endosome membranes and activation of TNIK. (Microbial infection) Glucosylated at Thr-35 by C.difficile toxin TcdA in the colonic epithelium, and by P.sordellii toxin TcsL in the vascular endothelium.

It is found in the midbody. The protein resides in the cell projection. The protein localises to the lamellipodium membrane. It localises to the golgi apparatus. Its subcellular location is the recycling endosome membrane. It is found in the lysosome. It catalyses the reaction GTP + H2O = GDP + phosphate + H(+). Activated by the guanine nucleotide-exchange factors RAPGEF3 and RAPGEF4 in a cAMP-dependent manner. Nucleotide exchange is also specifically stimulated by RAPGEF5, RASGEF1A and RASGEF1B. Functionally, small GTP-binding protein which cycles between a GDP-bound inactive and a GTP-bound active form. In its active form interacts with and regulates several effectors including MAP4K4, MINK1 and TNIK. Part of a signaling complex composed of NEDD4, RAP2A and TNIK which regulates neuronal dendrite extension and arborization during development. More generally, it is part of several signaling cascades and regulates cytoskeletal rearrangements, cell migration, cell adhesion and cell spreading. The sequence is that of Ras-related protein Rap-2a from Homo sapiens (Human).